The chain runs to 372 residues: Carbamoyl phosphate synthase small chain (372 aa).

Positions 1-186 (MTYCKRGTEG…IHQNNSPDII (186 aa)) are CPSase. Ser52, Gly233, and Gly235 together coordinate L-glutamine. Positions 185 to 372 (IIVLVDCGIK…KKMVIKDEGN (188 aa)) constitute a Glutamine amidotransferase type-1 domain. Cys261 functions as the Nucleophile in the catalytic mechanism. L-glutamine-binding residues include Leu262, Gln265, Asn303, Gly305, and Tyr306. Catalysis depends on residues His345 and Glu347.

The protein belongs to the CarA family. In terms of assembly, composed of two chains; the small (or glutamine) chain promotes the hydrolysis of glutamine to ammonia, which is used by the large (or ammonia) chain to synthesize carbamoyl phosphate. Tetramer of heterodimers (alpha,beta)4.

It carries out the reaction hydrogencarbonate + L-glutamine + 2 ATP + H2O = carbamoyl phosphate + L-glutamate + 2 ADP + phosphate + 2 H(+). The catalysed reaction is L-glutamine + H2O = L-glutamate + NH4(+). It functions in the pathway amino-acid biosynthesis; L-arginine biosynthesis; carbamoyl phosphate from bicarbonate: step 1/1. The protein operates within pyrimidine metabolism; UMP biosynthesis via de novo pathway; (S)-dihydroorotate from bicarbonate: step 1/3. Functionally, small subunit of the glutamine-dependent carbamoyl phosphate synthetase (CPSase). CPSase catalyzes the formation of carbamoyl phosphate from the ammonia moiety of glutamine, carbonate, and phosphate donated by ATP, constituting the first step of 2 biosynthetic pathways, one leading to arginine and/or urea and the other to pyrimidine nucleotides. The small subunit (glutamine amidotransferase) binds and cleaves glutamine to supply the large subunit with the substrate ammonia. The protein is Carbamoyl phosphate synthase small chain of Metallosphaera sedula (strain ATCC 51363 / DSM 5348 / JCM 9185 / NBRC 15509 / TH2).